The sequence spans 454 residues: Glutamate--tRNA ligase (454 aa).

The 'HIGH' region signature appears at P7–G17. Residues C96, C98, C123, and D125 each contribute to the Zn(2+) site. The 'KMSKS' region motif lies at R230 to R234. An ATP-binding site is contributed by K233.

Belongs to the class-I aminoacyl-tRNA synthetase family. Glutamate--tRNA ligase type 1 subfamily. In terms of assembly, monomer. Zn(2+) serves as cofactor.

It is found in the cytoplasm. The enzyme catalyses tRNA(Glu) + L-glutamate + ATP = L-glutamyl-tRNA(Glu) + AMP + diphosphate. In terms of biological role, catalyzes the attachment of glutamate to tRNA(Glu) in a two-step reaction: glutamate is first activated by ATP to form Glu-AMP and then transferred to the acceptor end of tRNA(Glu). The protein is Glutamate--tRNA ligase of Ruthia magnifica subsp. Calyptogena magnifica.